The chain runs to 388 residues: ATP phosphoribosyltransferase regulatory subunit (388 aa).

Belongs to the class-II aminoacyl-tRNA synthetase family. HisZ subfamily. As to quaternary structure, heteromultimer composed of HisG and HisZ subunits.

The protein localises to the cytoplasm. Its pathway is amino-acid biosynthesis; L-histidine biosynthesis; L-histidine from 5-phospho-alpha-D-ribose 1-diphosphate: step 1/9. Required for the first step of histidine biosynthesis. May allow the feedback regulation of ATP phosphoribosyltransferase activity by histidine. In Acinetobacter baylyi (strain ATCC 33305 / BD413 / ADP1), this protein is ATP phosphoribosyltransferase regulatory subunit.